Reading from the N-terminus, the 277-residue chain is Thymidylate synthase (277 aa).

R21 serves as a coordination point for dUMP. H51 contributes to the (6R)-5,10-methylene-5,6,7,8-tetrahydrofolate binding site. 139–140 is a dUMP binding site; sequence RR. Catalysis depends on C159, which acts as the Nucleophile. DUMP-binding positions include 179 to 182, N190, and 220 to 222; these read RSAD and HIY. D182 provides a ligand contact to (6R)-5,10-methylene-5,6,7,8-tetrahydrofolate. Residue A276 coordinates (6R)-5,10-methylene-5,6,7,8-tetrahydrofolate.

It belongs to the thymidylate synthase family. Bacterial-type ThyA subfamily. Homodimer.

Its subcellular location is the cytoplasm. The enzyme catalyses dUMP + (6R)-5,10-methylene-5,6,7,8-tetrahydrofolate = 7,8-dihydrofolate + dTMP. Its pathway is pyrimidine metabolism; dTTP biosynthesis. Functionally, catalyzes the reductive methylation of 2'-deoxyuridine-5'-monophosphate (dUMP) to 2'-deoxythymidine-5'-monophosphate (dTMP) while utilizing 5,10-methylenetetrahydrofolate (mTHF) as the methyl donor and reductant in the reaction, yielding dihydrofolate (DHF) as a by-product. This enzymatic reaction provides an intracellular de novo source of dTMP, an essential precursor for DNA biosynthesis. The chain is Thymidylate synthase from Ruegeria sp. (strain TM1040) (Silicibacter sp.).